Consider the following 229-residue polypeptide: Ribonuclease HII (229 aa).

Residues 42–229 (TRIAGVDEVG…KPVHKILYQE (188 aa)) form the RNase H type-2 domain. Positions 48, 49, and 139 each coordinate a divalent metal cation.

It belongs to the RNase HII family. The cofactor is Mn(2+). Mg(2+) serves as cofactor.

The protein localises to the cytoplasm. It carries out the reaction Endonucleolytic cleavage to 5'-phosphomonoester.. Its function is as follows. Endonuclease that specifically degrades the RNA of RNA-DNA hybrids. The chain is Ribonuclease HII from Ruegeria sp. (strain TM1040) (Silicibacter sp.).